Reading from the N-terminus, the 340-residue chain is Dihydroorotate dehydrogenase (quinone) (340 aa).

Residues A62 to K66 and T86 each bind FMN. Residue K66 participates in substrate binding. N111–F115 serves as a coordination point for substrate. N139 and N172 together coordinate FMN. A substrate-binding site is contributed by N172. Catalysis depends on S175, which acts as the Nucleophile. N177 is a substrate binding site. Residues K217 and T245 each contribute to the FMN site. N246 to T247 provides a ligand contact to substrate. FMN is bound by residues G268, G297, and Y318 to S319.

This sequence belongs to the dihydroorotate dehydrogenase family. Type 2 subfamily. In terms of assembly, monomer. Requires FMN as cofactor.

The protein resides in the cell membrane. The enzyme catalyses (S)-dihydroorotate + a quinone = orotate + a quinol. Its pathway is pyrimidine metabolism; UMP biosynthesis via de novo pathway; orotate from (S)-dihydroorotate (quinone route): step 1/1. In terms of biological role, catalyzes the conversion of dihydroorotate to orotate with quinone as electron acceptor. This chain is Dihydroorotate dehydrogenase (quinone), found in Alkalilimnicola ehrlichii (strain ATCC BAA-1101 / DSM 17681 / MLHE-1).